The chain runs to 664 residues: Kinesin-like protein KIF2B (664 aa).

Phosphothreonine; by PLK1 is present on Thr125. The stretch at 149 to 177 (CLREIEKLQKQREKRRRLQLEIRARRALD) forms a coiled coil. The residue at position 204 (Ser204) is a Phosphoserine; by PLK1. The 331-residue stretch at 213–543 (RICVCVRKRP…LRYANRVKEL (331 aa)) folds into the Kinesin motor domain. 303–310 (GQTGSGKT) is an ATP binding site. A disordered region spans residues 583 to 607 (VQKEEEKESDELTSTKEPAASWSRS). Residues 642–663 (VLTEIQKKLQLLRDDLQKKSQA) adopt a coiled-coil conformation.

The protein belongs to the TRAFAC class myosin-kinesin ATPase superfamily. Kinesin family. MCAK/KIF2 subfamily. Phosphorylation at Thr-125 by PLK1 is required for activity in the correction of kinetochore-microtubules attachment errors, while phosphorylation at Ser-204 also by PLK1 is required for the kinetochore localization and activity in prometaphase.

Its subcellular location is the cytoplasm. The protein resides in the cytoskeleton. It localises to the microtubule organizing center. The protein localises to the centrosome. It is found in the spindle. Its subcellular location is the chromosome. The protein resides in the centromere. It localises to the kinetochore. Functionally, plus end-directed microtubule-dependent motor required for spindle assembly and chromosome movement. Has microtubule depolymerization activity. Plays a role in chromosome congression. In Rattus norvegicus (Rat), this protein is Kinesin-like protein KIF2B.